A 349-amino-acid polypeptide reads, in one-letter code: 4-hydroxythreonine-4-phosphate dehydrogenase (349 aa).

Substrate-binding residues include histidine 141 and threonine 142. A divalent metal cation-binding residues include histidine 176, histidine 221, and histidine 276. Residues lysine 284, asparagine 293, and arginine 302 each contribute to the substrate site.

This sequence belongs to the PdxA family. As to quaternary structure, homodimer. Zn(2+) serves as cofactor. Mg(2+) is required as a cofactor. The cofactor is Co(2+).

Its subcellular location is the cytoplasm. The catalysed reaction is 4-(phosphooxy)-L-threonine + NAD(+) = 3-amino-2-oxopropyl phosphate + CO2 + NADH. Its pathway is cofactor biosynthesis; pyridoxine 5'-phosphate biosynthesis; pyridoxine 5'-phosphate from D-erythrose 4-phosphate: step 4/5. Its function is as follows. Catalyzes the NAD(P)-dependent oxidation of 4-(phosphooxy)-L-threonine (HTP) into 2-amino-3-oxo-4-(phosphooxy)butyric acid which spontaneously decarboxylates to form 3-amino-2-oxopropyl phosphate (AHAP). The polypeptide is 4-hydroxythreonine-4-phosphate dehydrogenase (Methylorubrum extorquens (strain PA1) (Methylobacterium extorquens)).